The chain runs to 292 residues: Putative phosphatase MPN_381 (292 aa).

Asp11 (nucleophile) is an active-site residue. Asp11 lines the Mg(2+) pocket. Phosphate is bound at residue Leu12. Asp13 contacts Mg(2+). Residues 60–61 (TG) and Lys217 contribute to the phosphate site. Mg(2+) is bound at residue Asp242. Phosphate is bound at residue Asn245.

This sequence belongs to the HAD-like hydrolase superfamily. Cof family. It depends on Mg(2+) as a cofactor.

This chain is Putative phosphatase MPN_381, found in Mycoplasma pneumoniae (strain ATCC 29342 / M129 / Subtype 1) (Mycoplasmoides pneumoniae).